A 277-amino-acid polypeptide reads, in one-letter code: Nickel transport system permease protein NikC (277 aa).

The Cytoplasmic portion of the chain corresponds to 1–12 (MNFFLSSRWSVR). The helical transmembrane segment at 13-33 (LALIIIALLALIALTSQWWLP) threads the bilayer. Over 34–78 (YDPQAIDLPSRLLSPDAQHWLGTDHLGRDIFSRLMAATRVSLGSV) the chain is Periplasmic. In terms of domain architecture, ABC transmembrane type-1 spans 67–260 (LMAATRVSLG…ISVMAFNLVG (194 aa)). A helical membrane pass occupies residues 79-99 (MACLLLVLTLGLVIGGSAGLI). At 100-120 (GGRVDQATMRVADMFMTFPTS) the chain is on the cytoplasmic side. A helical membrane pass occupies residues 121 to 141 (ILSFFMVGVLGTGLTNVIIAI). The Periplasmic portion of the chain corresponds to 142 to 183 (ALSHWAWYARMVRSLVISLRQREFVLASRLSGAGHVRVFVDH). The helical transmembrane segment at 184 to 204 (LAGAVIPSLLVLATLDIGHMM) threads the bilayer. Residues 205-207 (LHV) lie on the Cytoplasmic side of the membrane. A helical membrane pass occupies residues 208-228 (AGMSFLGLGVTAPTAEWGVMI). Residues 229–239 (NDARQYIWTQP) are Periplasmic-facing. A helical membrane pass occupies residues 240–260 (LQMFWPGLALFISVMAFNLVG). The Cytoplasmic segment spans residues 261–277 (DALRDHLDPHLVTEHAH).

It belongs to the binding-protein-dependent transport system permease family. OppBC subfamily. As to quaternary structure, probably forms a heterodimeric pore with NikB.

The protein resides in the cell inner membrane. In terms of biological role, involved in a nickel transport system, probably translocates nickel through the bacterial inner membrane. This chain is Nickel transport system permease protein NikC (nikC), found in Escherichia coli O157:H7.